The chain runs to 139 residues: Transcription antitermination protein NusB (139 aa).

It belongs to the NusB family.

Involved in transcription antitermination. Required for transcription of ribosomal RNA (rRNA) genes. Binds specifically to the boxA antiterminator sequence of the ribosomal RNA (rrn) operons. In Nitratiruptor sp. (strain SB155-2), this protein is Transcription antitermination protein NusB.